The primary structure comprises 572 residues: MRTSQYLLSTLKETPADAEVISHQLMLRAGMIRKLASGLYTWLPTGLRVLKKVENIVREEMNNAGAIEVSMPVVQPADLWQESGRWEQYGPELLRFVDRGERPFVLGPTHEEVITDLVRNELSSYKQLPLNFFQIQTKFRDEVRPRFGVMRSREFLMKDAYSFHTSQESLQETYDAMYAAYSRIFSRMGLDFRAVQADTGSIGGNASHEFQVLAQSGEDDIVFSDVSDYAANIELAEAIAPQTPRAAATQEMTLIDTPNAKTIAELVEQFNLPIEKTVKTLLVKAVKDSKSPLVALLVRGDHELNEVKAEKLPNVASPLTFATEEEIRAVINAGPGSLGPVNMPVPVIIDRSVAAMSDFAAGANIDGKHYFGINWDRDVATPIVADIRNVVAGDPSPDGQGTLLIKRGIEVGHIFQLGTKYSEALKASVQGEDGRNQILTMGCYGIGVTRVVAAAIEQNFDERGIVWPDAIAPFQVAILPMNMHKSFRVQELAEKLYSELRAQGIEVLMDDRKERPGVMFADMELIGIPHTIVIGDRNLDNDDIEYKYRRSGEKSLIKTGDIVDYLVKAIKG.

It belongs to the class-II aminoacyl-tRNA synthetase family. ProS type 1 subfamily. As to quaternary structure, homodimer.

Its subcellular location is the cytoplasm. It carries out the reaction tRNA(Pro) + L-proline + ATP = L-prolyl-tRNA(Pro) + AMP + diphosphate. Catalyzes the attachment of proline to tRNA(Pro) in a two-step reaction: proline is first activated by ATP to form Pro-AMP and then transferred to the acceptor end of tRNA(Pro). As ProRS can inadvertently accommodate and process non-cognate amino acids such as alanine and cysteine, to avoid such errors it has two additional distinct editing activities against alanine. One activity is designated as 'pretransfer' editing and involves the tRNA(Pro)-independent hydrolysis of activated Ala-AMP. The other activity is designated 'posttransfer' editing and involves deacylation of mischarged Ala-tRNA(Pro). The misacylated Cys-tRNA(Pro) is not edited by ProRS. This chain is Proline--tRNA ligase, found in Salmonella arizonae (strain ATCC BAA-731 / CDC346-86 / RSK2980).